Reading from the N-terminus, the 61-residue chain is Large ribosomal subunit protein uL30 (61 aa).

Belongs to the universal ribosomal protein uL30 family. Part of the 50S ribosomal subunit.

The polypeptide is Large ribosomal subunit protein uL30 (Corynebacterium glutamicum (strain R)).